Here is a 79-residue protein sequence, read N- to C-terminus: ESX secretion system protein YukD (79 aa).

The protein belongs to the EsaB family.

In terms of biological role, required for YukE secretion. Probable component or regulator of the ESX/ESAT-6-like secretion system (BsEss). This is ESX secretion system protein YukD (yukD) from Bacillus subtilis (strain 168).